An 821-amino-acid chain; its full sequence is MMCLIIYLSIFLIIVSRMLTGLPMMDRPDEGGLARRTVGEVEGEFSYRDDVDVADVRNLFIMLPKNGSDIFLFIFDRRSQRQRGTMFLFPKAGFVQPTPAKVRDEAAAAPFGFISPVYPLSSLLFNPYNGRYLTTRHLIAFEVTPESSLHDWYFARSPTTATQTQPLGHITNPPRRSPKDKPTTSGHTDLIIRYCALELDFFQDTRRQRDGIYLPNYEAVWPLAMNFLEGMWIWSNRTLVNVTIGVGFMGFSLTSISYPPLEIIVTPHYTNARMITRFKSSLVLDPPGPSEGPLYKVYVLGYGNNRINGSFYKTMRTIASYPRTKPRLSLPPFHGTYGTALFLSHATPQDMDGTTAYISKISTRLATALFSLSEVRRLSGYVAIDELIDLDFNTRLLANTLLADGMQNFQDPINITYYYNSDVGRTHLRDALDTIDHQHVSHGSLITRARYLQLIYTYTSMEKQSQLSLKLSGDIVKDLYLETLYSDVVRWNTTAKQALFLSSMLIYIAGNIQSSVEQEAINAGRMLFLQCTSMCTTEHASTVRWNPQQILYDLTKSSTRFNIFDGFSPCMASNRYDIISPYGILDLFSAFPISSYRSIEKPAVDSNTHNIIFNLRNLYTFIPELFSCPGVSSNHQRPIAVLPIGINCTYLITRRDPRRGTLYIVDGIDVSNPIIISYLRSGECGIERGIILPGNLNNPENTDQCLYCGCVFMRYKSSGEIVDLLLINDKAVELELVAGENSTISAFNPTKYSSPSSVLLLFPNGTIVTLMAFTSHEVIVFSSNFIWASIGGVFAACLIIYIIIKMLCSFTPDVRYTLLNN.

The N-terminal stretch at 1–20 (MMCLIIYLSIFLIIVSRMLT) is a signal peptide. The Virion surface segment spans residues 21-783 (GLPMMDRPDE…TSHEVIVFSS (763 aa)). N-linked (GlcNAc...) asparagine; by host glycosylation occurs at asparagine 66. Positions 163 to 186 (QTQPLGHITNPPRRSPKDKPTTSG) are disordered. 8 N-linked (GlcNAc...) asparagine; by host glycosylation sites follow: asparagine 236, asparagine 241, asparagine 308, asparagine 414, asparagine 492, asparagine 647, asparagine 741, and asparagine 764. The segment at 236–299 (NRTLVNVTIG…SEGPLYKVYV (64 aa)) is interaction with gL. Residues 784-804 (NFIWASIGGVFAACLIIYIII) form a helical membrane-spanning segment. Over 805-821 (KMLCSFTPDVRYTLLNN) the chain is Intravirion.

It belongs to the herpesviridae glycoprotein H family. In terms of assembly, interacts with glycoprotein L (gL); this interaction is necessary for the correct processing and cell surface expression of gH. The heterodimer gH/gL seems to interact with gB trimers during fusion. Post-translationally, N-glycosylated, O-glycosylated, and sialylated.

It is found in the virion membrane. The protein resides in the host cell membrane. Its subcellular location is the host endosome membrane. Its function is as follows. The heterodimer glycoprotein H-glycoprotein L is required for the fusion of viral and plasma membranes leading to virus entry into the host cell. Following initial binding to host receptor, membrane fusion is mediated by the fusion machinery composed of gB and the heterodimer gH/gL. May also be involved in the fusion between the virion envelope and the outer nuclear membrane during virion morphogenesis. This Feline herpesvirus 1 (FeHV-1) protein is Envelope glycoprotein H.